A 666-amino-acid chain; its full sequence is DNA-directed RNA polymerase subunit beta' (666 aa).

The Zn(2+) site is built by Cys-69, Cys-71, Cys-87, and Cys-90. Residues Asp-489, Asp-491, and Asp-493 each coordinate Mg(2+).

Belongs to the RNA polymerase beta' chain family. RpoC1 subfamily. In plastids the minimal PEP RNA polymerase catalytic core is composed of four subunits: alpha, beta, beta', and beta''. When a (nuclear-encoded) sigma factor is associated with the core the holoenzyme is formed, which can initiate transcription. Mg(2+) serves as cofactor. The cofactor is Zn(2+).

The protein resides in the plastid. It is found in the chloroplast. It catalyses the reaction RNA(n) + a ribonucleoside 5'-triphosphate = RNA(n+1) + diphosphate. DNA-dependent RNA polymerase catalyzes the transcription of DNA into RNA using the four ribonucleoside triphosphates as substrates. This chain is DNA-directed RNA polymerase subunit beta', found in Chara vulgaris (Common stonewort).